A 190-amino-acid polypeptide reads, in one-letter code: ATP synthase subunit b, chloroplastic (190 aa).

Residues leucine 35–leucine 55 traverse the membrane as a helical segment.

The protein belongs to the ATPase B chain family. F-type ATPases have 2 components, F(1) - the catalytic core - and F(0) - the membrane proton channel. F(1) has five subunits: alpha(3), beta(3), gamma(1), delta(1), epsilon(1). F(0) has four main subunits: a(1), b(1), b'(1) and c(10-14). The alpha and beta chains form an alternating ring which encloses part of the gamma chain. F(1) is attached to F(0) by a central stalk formed by the gamma and epsilon chains, while a peripheral stalk is formed by the delta, b and b' chains.

The protein resides in the plastid. It localises to the chloroplast thylakoid membrane. Its function is as follows. F(1)F(0) ATP synthase produces ATP from ADP in the presence of a proton or sodium gradient. F-type ATPases consist of two structural domains, F(1) containing the extramembraneous catalytic core and F(0) containing the membrane proton channel, linked together by a central stalk and a peripheral stalk. During catalysis, ATP synthesis in the catalytic domain of F(1) is coupled via a rotary mechanism of the central stalk subunits to proton translocation. In terms of biological role, component of the F(0) channel, it forms part of the peripheral stalk, linking F(1) to F(0). This is ATP synthase subunit b, chloroplastic from Coffea arabica (Arabian coffee).